The primary structure comprises 57 residues: DNA-directed RNA polymerase subunit Rpo6 (57 aa).

Belongs to the archaeal Rpo6/eukaryotic RPB6 RNA polymerase subunit family. In terms of assembly, part of the RNA polymerase complex.

The protein resides in the cytoplasm. It catalyses the reaction RNA(n) + a ribonucleoside 5'-triphosphate = RNA(n+1) + diphosphate. Its function is as follows. DNA-dependent RNA polymerase (RNAP) catalyzes the transcription of DNA into RNA using the four ribonucleoside triphosphates as substrates. This Methanocaldococcus jannaschii (strain ATCC 43067 / DSM 2661 / JAL-1 / JCM 10045 / NBRC 100440) (Methanococcus jannaschii) protein is DNA-directed RNA polymerase subunit Rpo6.